A 186-amino-acid chain; its full sequence is Mitochondrial import inner membrane translocase subunit Tim22 (186 aa).

2 disulfide bridges follow: cysteine 61–cysteine 133 and cysteine 152–cysteine 171. 3 helical membrane-spanning segments follow: residues 66–86 (ALAC…TAGI), 117–135 (YAKN…ECLV), and 162–182 (AGLK…AVID).

Belongs to the Tim17/Tim22/Tim23 family. As to quaternary structure, core component of the TIM22 complex.

It localises to the mitochondrion inner membrane. Essential core component of the TIM22 complex, a complex that mediates the import and insertion of multi-pass transmembrane proteins into the mitochondrial inner membrane. In the TIM22 complex, it constitutes the voltage-activated and signal-gated channel. Forms a twin-pore translocase that uses the membrane potential as external driving force in 2 voltage-dependent steps. In Xenopus tropicalis (Western clawed frog), this protein is Mitochondrial import inner membrane translocase subunit Tim22 (timm22).